Here is a 182-residue protein sequence, read N- to C-terminus: RFKKIRRLGALPGLTNKRPRSGSDLKNQLRSGKRSQYRIRLEEKQKLRFHYGLTERQLLKYVHIAGKAKGSTGQVLLQLLEMRLDNILFRLGMASTIPGARQLVNHRHILVNGRIVDIPSYRCKPRDIITTKDKQRSKALIQNSIASSPHEELPNHLTIDPFQYKGLVNQIIDSKWIGLKIN.

Positions 82 to 143 (MRLDNILFRL…KQRSKALIQN (62 aa)) constitute an S4 RNA-binding domain.

It belongs to the universal ribosomal protein uS4 family. In terms of assembly, part of the 30S ribosomal subunit. Contacts protein S5. The interaction surface between S4 and S5 is involved in control of translational fidelity.

Its subcellular location is the plastid. It is found in the chloroplast. In terms of biological role, one of the primary rRNA binding proteins, it binds directly to 16S rRNA where it nucleates assembly of the body of the 30S subunit. Functionally, with S5 and S12 plays an important role in translational accuracy. The chain is Small ribosomal subunit protein uS4c (rps4) from Libertia formosa (Snowy mermaid).